The primary structure comprises 534 residues: Probable protein kinase UbiB (534 aa).

Residues 23-43 (DLLFDLPLPWFLLALRYVLPW) traverse the membrane as a helical segment. The Protein kinase domain occupies 125-492 (RFDVEPLASA…WKKRKDDWFL (368 aa)). Residues 131-139 (LASASVAQV) and lysine 153 contribute to the ATP site. Aspartate 288 acts as the Proton acceptor in catalysis. 2 consecutive transmembrane segments (helical) span residues 490–510 (WFLR…AAGG) and 512–532 (LHEL…YLVV).

This sequence belongs to the ABC1 family. UbiB subfamily.

It localises to the cell inner membrane. It participates in cofactor biosynthesis; ubiquinone biosynthesis [regulation]. Its function is as follows. Is probably a protein kinase regulator of UbiI activity which is involved in aerobic coenzyme Q (ubiquinone) biosynthesis. This chain is Probable protein kinase UbiB, found in Pseudomonas fluorescens (strain Pf0-1).